Reading from the N-terminus, the 695-residue chain is Eukaryotic translation initiation factor 3 subunit B (695 aa).

Over residues 1 to 10 the composition is skewed to basic and acidic residues; the sequence is MAKKKGDEKA. Residues 1–43 form a disordered region; it reads MAKKKGDEKANPAPQSDNEEQNFEEEPDFDDPEDFVEIPEEEL. The segment covering 17 to 43 has biased composition (acidic residues); that stretch reads DNEEQNFEEEPDFDDPEDFVEIPEEEL. Residues 60-144 form the RRM domain; it reads NVVVVDGCPQ…HTFLVNLFTD (85 aa). WD repeat units follow at residues 164 to 205, 295 to 335, 338 to 373, and 444 to 486; these read KVQS…PLLL, PPDE…LLDK, IKIPGIRDFSWSPSDNTLAYWVAEDKDVPARVTLLE, and EIKE…APTL.

This sequence belongs to the eIF-3 subunit B family. Component of the eukaryotic translation initiation factor 3 (eIF-3) complex.

The protein resides in the cytoplasm. RNA-binding component of the eukaryotic translation initiation factor 3 (eIF-3) complex, which is involved in protein synthesis of a specialized repertoire of mRNAs and, together with other initiation factors, stimulates binding of mRNA and methionyl-tRNAi to the 40S ribosome. The eIF-3 complex specifically targets and initiates translation of a subset of mRNAs involved in cell proliferation. This Bombyx mori (Silk moth) protein is Eukaryotic translation initiation factor 3 subunit B.